Consider the following 150-residue polypeptide: Endoribonuclease YbeY (150 aa).

Zn(2+)-binding residues include His-102, His-106, and His-112.

This sequence belongs to the endoribonuclease YbeY family. It depends on Zn(2+) as a cofactor.

It localises to the cytoplasm. In terms of biological role, single strand-specific metallo-endoribonuclease involved in late-stage 70S ribosome quality control and in maturation of the 3' terminus of the 16S rRNA. This Thermotoga petrophila (strain ATCC BAA-488 / DSM 13995 / JCM 10881 / RKU-1) protein is Endoribonuclease YbeY.